The sequence spans 417 residues: Serine hydroxymethyltransferase (417 aa).

(6S)-5,6,7,8-tetrahydrofolate contacts are provided by residues L112 and 116 to 118 (GHL). K221 is subject to N6-(pyridoxal phosphate)lysine. E247 contacts (6S)-5,6,7,8-tetrahydrofolate.

It belongs to the SHMT family. As to quaternary structure, homodimer. Requires pyridoxal 5'-phosphate as cofactor.

Its subcellular location is the cytoplasm. It catalyses the reaction (6R)-5,10-methylene-5,6,7,8-tetrahydrofolate + glycine + H2O = (6S)-5,6,7,8-tetrahydrofolate + L-serine. It functions in the pathway one-carbon metabolism; tetrahydrofolate interconversion. It participates in amino-acid biosynthesis; glycine biosynthesis; glycine from L-serine: step 1/1. Functionally, catalyzes the reversible interconversion of serine and glycine with tetrahydrofolate (THF) serving as the one-carbon carrier. This reaction serves as the major source of one-carbon groups required for the biosynthesis of purines, thymidylate, methionine, and other important biomolecules. Also exhibits THF-independent aldolase activity toward beta-hydroxyamino acids, producing glycine and aldehydes, via a retro-aldol mechanism. The polypeptide is Serine hydroxymethyltransferase (Borreliella burgdorferi (strain ATCC 35210 / DSM 4680 / CIP 102532 / B31) (Borrelia burgdorferi)).